Reading from the N-terminus, the 222-residue chain is Small ribosomal subunit protein eS1 (222 aa).

Belongs to the eukaryotic ribosomal protein eS1 family.

The chain is Small ribosomal subunit protein eS1 from Pyrobaculum neutrophilum (strain DSM 2338 / JCM 9278 / NBRC 100436 / V24Sta) (Thermoproteus neutrophilus).